We begin with the raw amino-acid sequence, 734 residues long: Oligopeptide transporter 2 (734 aa).

Helical transmembrane passes span 44–64 (MWFL…FFGY), 68–88 (PLMI…KLMA), 125–145 (GAGF…IMAF), 152–172 (FLAS…WAGI), 211–231 (FFVI…YLFL), 252–272 (LGSG…SVIA), 283–303 (FFAI…VIPI), 359–379 (FFAI…THVA), 414–434 (WWFY…CIFM), 442–462 (WWGL…VSII), 525–545 (MFLV…SVAW), 596–616 (YPAL…VWLL), 644–664 (ATSV…YFVF), and 677–697 (VLSA…YFSL).

The protein belongs to the oligopeptide OPT transporter (TC 2.A.67.1) family. As to expression, expressed in flowers, leaves, roots, and stems.

The protein resides in the membrane. Its function is as follows. Involved in the translocation of tetra- and pentapeptides across the cellular membrane in an energy-dependent manner. The sequence is that of Oligopeptide transporter 2 (OPT2) from Arabidopsis thaliana (Mouse-ear cress).